Consider the following 163-residue polypeptide: Urease accessory protein UreE (163 aa).

It belongs to the UreE family.

The protein resides in the cytoplasm. In terms of biological role, involved in urease metallocenter assembly. Binds nickel. Probably functions as a nickel donor during metallocenter assembly. The polypeptide is Urease accessory protein UreE (Actinomyces naeslundii).